Here is a 645-residue protein sequence, read N- to C-terminus: Fructose-1,6-bisphosphatase class 3 (645 aa).

It belongs to the FBPase class 3 family. It depends on Mn(2+) as a cofactor.

It catalyses the reaction beta-D-fructose 1,6-bisphosphate + H2O = beta-D-fructose 6-phosphate + phosphate. The protein operates within carbohydrate biosynthesis; gluconeogenesis. This chain is Fructose-1,6-bisphosphatase class 3, found in Fusobacterium nucleatum subsp. nucleatum (strain ATCC 25586 / DSM 15643 / BCRC 10681 / CIP 101130 / JCM 8532 / KCTC 2640 / LMG 13131 / VPI 4355).